The following is a 251-amino-acid chain: UPF0246 protein PEPE_1842 (251 aa).

This sequence belongs to the UPF0246 family.

This Pediococcus pentosaceus (strain ATCC 25745 / CCUG 21536 / LMG 10740 / 183-1w) protein is UPF0246 protein PEPE_1842.